The following is a 516-amino-acid chain: mRNA export factor ICP27 homolog (516 aa).

Zn(2+)-binding residues include cysteine 231, histidine 336, cysteine 338, and cysteine 343. The segment at 231-343 adopts a CHC2-type zinc-finger fold; that stretch reads CVFNDNGHGD…SNHKCDDVSC (113 aa). Polar residues predominate over residues 399-409; the sequence is YSTSRDLPQTS. Residues 399 to 423 are disordered; the sequence is YSTSRDLPQTSHRSHKNQGTPKVKS.

The protein belongs to the HHV-1 ICP27 protein family.

It localises to the virion tegument. Its subcellular location is the virion. The protein resides in the host nucleus. The protein localises to the host cytoplasm. In terms of biological role, immediate early (EI) protein that plays many roles during productive infection including regulation of viral gene expression and nuclear export of intronless viral RNAs. In Homo sapiens (Human), this protein is mRNA export factor ICP27 homolog.